The following is a 275-amino-acid chain: Elongation factor Ts (275 aa).

An involved in Mg(2+) ion dislocation from EF-Tu region spans residues T76 to V79.

The protein belongs to the EF-Ts family.

The protein localises to the cytoplasm. Functionally, associates with the EF-Tu.GDP complex and induces the exchange of GDP to GTP. It remains bound to the aminoacyl-tRNA.EF-Tu.GTP complex up to the GTP hydrolysis stage on the ribosome. The polypeptide is Elongation factor Ts (Salinispora tropica (strain ATCC BAA-916 / DSM 44818 / JCM 13857 / NBRC 105044 / CNB-440)).